Consider the following 226-residue polypeptide: Clarin-3 (226 aa).

Residues 8–28 (LMFLSSFFTSLGSFIVICSIL) traverse the membrane as a helical segment. Asn83 carries an N-linked (GlcNAc...) asparagine glycan. 3 consecutive transmembrane segments (helical) span residues 92–112 (VTIL…GFTF), 129–149 (VYTW…LFVA), and 181–201 (FWLI…IIFY).

Belongs to the clarin family.

It is found in the membrane. The sequence is that of Clarin-3 (CLRN3) from Homo sapiens (Human).